Here is a 230-residue protein sequence, read N- to C-terminus: Porin OmpL (230 aa).

The first 20 residues, 1-20 (MKKINAIILLSSLTSASVFA), serve as a signal peptide directing secretion.

It belongs to the oligogalacturonate-specific porin KdgM (TC 1.B.35) family. OmpL subfamily.

Its subcellular location is the cell outer membrane. Its function is as follows. Outer membrane channel protein that allows an efficient diffusion of low-molecular-weight solutes such as small sugars and tetraglycine. However, the specific substrate recognized by the OmpL channel is unknown. The sequence is that of Porin OmpL (ompL) from Escherichia coli (strain K12).